A 204-amino-acid chain; its full sequence is Putative peptidase PfaP (204 aa).

The signal sequence occupies residues 1–27 (MRLRKTRKIVVSMKDMAASGGYYIASS). Ser19 serves as the catalytic Nucleophile. Residue Lys70 is the Proton donor/acceptor of the active site.

The protein belongs to the peptidase S49 family.

Possible protease. May be involved in export of periplasmic flagella proteins. The sequence is that of Putative peptidase PfaP (pfaP) from Leptospira borgpetersenii.